The sequence spans 338 residues: uncharacterized protein (338 aa).

This is an uncharacterized protein from Bacillus subtilis (strain 168).